The primary structure comprises 162 residues: Peptide deformylase-like (162 aa).

The protein belongs to the polypeptide deformylase family.

The chain is Peptide deformylase-like from Staphylococcus aureus (strain COL).